A 104-amino-acid polypeptide reads, in one-letter code: U20-lycotoxin-Ls1d (104 aa).

The first 30 residues, 1–30 (MFSTSDQVSKMNSRILSALLILGIATCVIA), serve as a signal peptide directing secretion. Residues 31-76 (GGFCPKSRHPQCNLSYKINDCCAQSDCRVGSVCCVEGCGNVCRAES) enclose the WAP domain. Cystine bridges form between cysteine 34-cysteine 64, cysteine 42-cysteine 68, cysteine 51-cysteine 63, cysteine 52-cysteine 90, and cysteine 57-cysteine 72.

It belongs to the venom protein 11 family. 02 (wap-2) subfamily. In terms of processing, contains 5 disulfide bonds. Expressed by the venom gland.

The protein resides in the secreted. In terms of biological role, has antibacterial activity. The sequence is that of U20-lycotoxin-Ls1d from Lycosa singoriensis (Wolf spider).